The sequence spans 254 residues: PF03932 family protein CutC (254 aa).

Belongs to the CutC family.

It is found in the cytoplasm. The chain is PF03932 family protein CutC from Yersinia pseudotuberculosis serotype I (strain IP32953).